Consider the following 351-residue polypeptide: AA9 family lytic polysaccharide monooxygenase A (351 aa).

His1 contributes to the Cu(2+) binding site. Cys52 and Cys178 form a disulfide bridge. N-linked (GlcNAc...) asparagine glycosylation occurs at Asn53. Cu(2+) is bound at residue His86. N-linked (GlcNAc...) asparagine glycosylation is present at Asn138. Residues His164 and Gln173 each contribute to the O2 site. Cu(2+) is bound at residue Tyr175. Residue Ser280 is the site of GPI-anchor amidated serine attachment. Residues 281 to 351 (SAIGTSTASS…RSGTLGRLSF (71 aa)) constitute a propeptide, removed in mature form.

It belongs to the polysaccharide monooxygenase AA9 family. Cu(2+) serves as cofactor.

The protein resides in the cell membrane. The enzyme catalyses [(1-&gt;4)-beta-D-glucosyl]n+m + reduced acceptor + O2 = 4-dehydro-beta-D-glucosyl-[(1-&gt;4)-beta-D-glucosyl]n-1 + [(1-&gt;4)-beta-D-glucosyl]m + acceptor + H2O.. Lytic polysaccharide monooxygenase (LPMO) that depolymerizes crystalline and amorphous polysaccharides via the oxidation of scissile alpha- or beta-(1-4)-glycosidic bonds, yielding C1 or C4 oxidation products. Catalysis by LPMOs requires the reduction of the active-site copper from Cu(II) to Cu(I) by a reducing agent and H(2)O(2) or O(2) as a cosubstrate. In terms of biological role, has broad specificity, cleaving at any position along the beta-glucan backbone of xyloglucan, regardless of substitutions. Shows minor activity on glucomannan. This chain is AA9 family lytic polysaccharide monooxygenase A, found in Gloeophyllum trabeum (Brown rot fungus).